The sequence spans 192 residues: Der GTPase-activating protein YihI (192 aa).

The tract at residues 1 to 80 (MSRTKKTRRI…KAAVKEVKDP (80 aa)) is disordered. Composition is skewed to basic and acidic residues over residues 9 to 25 (RITDIMPARKADKKPEQ), 37 to 48 (TRYELDAKAREE), and 65 to 80 (DPAEQKKAAVKEVKDP).

The protein belongs to the YihI family. In terms of assembly, interacts with Der.

Its function is as follows. A GTPase-activating protein (GAP) that modifies Der/EngA GTPase function. May play a role in ribosome biogenesis. The protein is Der GTPase-activating protein YihI of Actinobacillus pleuropneumoniae serotype 5b (strain L20).